The chain runs to 320 residues: tRNA(Ile)-lysidine synthase (320 aa).

33 to 38 contributes to the ATP binding site; that stretch reads SGGPDS.

Belongs to the tRNA(Ile)-lysidine synthase family.

The protein localises to the cytoplasm. The enzyme catalyses cytidine(34) in tRNA(Ile2) + L-lysine + ATP = lysidine(34) in tRNA(Ile2) + AMP + diphosphate + H(+). Ligates lysine onto the cytidine present at position 34 of the AUA codon-specific tRNA(Ile) that contains the anticodon CAU, in an ATP-dependent manner. Cytidine is converted to lysidine, thus changing the amino acid specificity of the tRNA from methionine to isoleucine. This is tRNA(Ile)-lysidine synthase from Mycolicibacterium paratuberculosis (strain ATCC BAA-968 / K-10) (Mycobacterium paratuberculosis).